Reading from the N-terminus, the 346-residue chain is NADH-cytochrome b5 reductase 2 (346 aa).

Residues 28–50 form a helical membrane-spanning segment; sequence GGSNAALYAGLAAAAGAGAYYFL. The region spanning 95-200 is the FAD-binding FR-type domain; the sequence is QGFISLKLDS…KGPIPKYPWS (106 aa). 203 to 238 serves as a coordination point for FAD; that stretch reads KHDHIALIAGGTGITPMYQLARAIFNNPADKTKVTL.

The protein belongs to the flavoprotein pyridine nucleotide cytochrome reductase family. Requires FAD as cofactor.

Its subcellular location is the mitochondrion outer membrane. It carries out the reaction 2 Fe(III)-[cytochrome b5] + NADH = 2 Fe(II)-[cytochrome b5] + NAD(+) + H(+). Its function is as follows. May mediate the reduction of outer membrane cytochrome b5. The protein is NADH-cytochrome b5 reductase 2 (mcr1) of Botryotinia fuckeliana (strain B05.10) (Noble rot fungus).